We begin with the raw amino-acid sequence, 434 residues long: 26S proteasome regulatory subunit RPN6 (434 aa).

Position 2 is an N-acetylserine (Ser2). Residues 235-404 (AFSYFFESFE…GWLYVYETPN (170 aa)) form the PCI domain.

Belongs to the proteasome subunit S9 family. Component of the lid subcomplex of the 19S proteasome regulatory particle complex (also named PA700 complex). The 26S proteasome consists of a 20S proteasome core and two 19S regulatory subunits. Post-translationally, N-acetylated by NAT1.

Its function is as follows. Component of the lid subcomplex of the 26S proteasome, a multiprotein complex involved in the ATP-dependent degradation of ubiquitinated proteins. In the complex, RPN6 is required for proteasome assembly. This is 26S proteasome regulatory subunit RPN6 (RPN6) from Saccharomyces cerevisiae (strain ATCC 204508 / S288c) (Baker's yeast).